The primary structure comprises 71 residues: DNA gyrase inhibitor YacG (71 aa).

4 residues coordinate Zn(2+): Cys7, Cys10, Cys26, and Cys30.

This sequence belongs to the DNA gyrase inhibitor YacG family. As to quaternary structure, interacts with GyrB. Zn(2+) is required as a cofactor.

Functionally, inhibits all the catalytic activities of DNA gyrase by preventing its interaction with DNA. Acts by binding directly to the C-terminal domain of GyrB, which probably disrupts DNA binding by the gyrase. This Shewanella amazonensis (strain ATCC BAA-1098 / SB2B) protein is DNA gyrase inhibitor YacG.